The sequence spans 321 residues: Putative membrane-bound redox modulator Alx (321 aa).

The Periplasmic portion of the chain corresponds to 1–6; it reads MNTVGT. A helical membrane pass occupies residues 7–27; sequence PLLWGGFAVVVTIMLAIDLLL. The Cytoplasmic segment spans residues 28–43; it reads QGRRGAHAMTMKQAAA. A helical membrane pass occupies residues 44-64; that stretch reads WSLVWVTLSLLFNAAFWWYLV. The Periplasmic portion of the chain corresponds to 65 to 89; it reads QTEGRAVADPQALAFLTGYLIEKSL. A helical membrane pass occupies residues 90 to 110; it reads AVDNVFVWLMLFSYFSVPAAL. At 111–113 the chain is on the cytoplasmic side; sequence QRR. A helical transmembrane segment spans residues 114–134; sequence VLVYGVLGAIVLRTIMIFTGS. Residue Trp135 is a topological domain, periplasmic. The chain crosses the membrane as a helical span at residues 136–156; the sequence is LISQFDWILYIFGAFLLFTGV. At 157–198 the chain is on the cytoplasmic side; it reads KMALAHEDESGIGDKPLVRWLRGHLRMTDTIDNEHFFVRKNG. Residues 199–219 traverse the membrane as a helical segment; the sequence is LLYATPLMLVLILVELSDVIF. Residues 220 to 225 lie on the Periplasmic side of the membrane; sequence AVDSIP. Residues 226–246 form a helical membrane-spanning segment; sequence AIFAVTTDPFIVLTSNLFAIL. The Cytoplasmic portion of the chain corresponds to 247 to 261; that stretch reads GLRAMYFLLAGVAER. A helical membrane pass occupies residues 262-282; it reads FSMLKYGLAVILVFIGIKMLI. The Periplasmic portion of the chain corresponds to 283–286; that stretch reads VDFY. Residues 287 to 307 traverse the membrane as a helical segment; sequence HIPIAVSLGVVFGILVMTFII. Residues 308 to 321 are Cytoplasmic-facing; the sequence is NAWVNYRHDKQRVE.

This sequence belongs to the TerC family.

The protein localises to the cell inner membrane. Its function is as follows. Has been proposed to be a redox modulator. This chain is Putative membrane-bound redox modulator Alx (alx), found in Escherichia coli O6:H1 (strain CFT073 / ATCC 700928 / UPEC).